Consider the following 254-residue polypeptide: Triosephosphate isomerase (254 aa).

Substrate is bound at residue 10-12; the sequence is NWK. The active-site Electrophile is the H99. E169 serves as the catalytic Proton acceptor. Substrate-binding positions include G175, S215, and 236 to 237; that span reads GG.

Belongs to the triosephosphate isomerase family. Homodimer.

The protein localises to the cytoplasm. The enzyme catalyses D-glyceraldehyde 3-phosphate = dihydroxyacetone phosphate. The protein operates within carbohydrate biosynthesis; gluconeogenesis. It participates in carbohydrate degradation; glycolysis; D-glyceraldehyde 3-phosphate from glycerone phosphate: step 1/1. Involved in the gluconeogenesis. Catalyzes stereospecifically the conversion of dihydroxyacetone phosphate (DHAP) to D-glyceraldehyde-3-phosphate (G3P). In Chlamydia felis (strain Fe/C-56) (Chlamydophila felis), this protein is Triosephosphate isomerase.